The chain runs to 190 residues: MPSLPTLQPLDLYRRTLACLVLAVSCLGGGGLWADDARTSIEQRSNAVSQVLLGIFSYVRWPKEPAVLQLCVVGPTEYADGLLRGMVQANGRRVHAERRAVDNPDLGTLCNVIYLGVVDERERQQVFRSLAGHPVLSISERGTECSVGSMFCLNVGGPRITFEANLDSIARSGVRVHPSVLKLARRQATP.

Arg60 lines the GMP pocket. 2 cysteine pairs are disulfide-bonded: Cys71-Cys110 and Cys145-Cys152. Residues Arg175 and His177 each coordinate GMP.

As to quaternary structure, homodimer. Interacts with TpbB/YfiN. Interacts with YfiB. The YfiB-YfiR complex is a 2:2 heterotetramer. In terms of processing, cys-71 and Cys-110 form a disulfide bond in the oxidized form but maintain their free form in the non-oxidized YfiR structure. The Cys-145-Cys-152 disulfide bond is well formed in both structures. The Cys145-Cys152 disulfide bond, but not Cys-71-Cys-110, plays an important role in maintaining the correct folding of the protein.

The protein localises to the periplasm. With respect to regulation, tpbB/YfiN repression is released through an YfiB-dependent sequestration of YfiR to the outer membrane. Binds vitamin B6 (VB6) or L-Trp at the periphery of the dimer, and both VB6 and L-Trp are able to reduce biofilm formation induced by YfiB L43P mutant. However, VB6 or L-Trp alone may have little effects in interrupting the YfiB-YfiR interaction. GMP enhances the binding affinity between YfiB and YfiR. Negatively regulates the activity of the diguanylate cyclase TpbB/YfiN, leading to decreased c-di-GMP production. Inhibits TpbB/YfiN allosterically, through a hydrophobic interaction between the C-terminus of YfiR and a conserved region of the periplasmic PAS domain of TpbB/YfiN. Under reducing conditions, may also act as an YfiB-independent sensing device that is able to activate TpbB/YfiN in response to the redox status of the periplasm. In terms of biological role, part of the YfiB-TpbB-YfiR (or yfiBNR) system, encoding a tripartite signaling module that modulates intracellular c-di-GMP levels. The system is a key regulator of the small colony variant (SCV) phenotype, and plays an important role in biofilm formation and in vivo persistence. The c-di-GMP produced by TpbB/YfiN stimulates the production of the Pel and Psl exopolysaccharides, which promotes surface attachment, generates an SCV phenotype and confers resistance against phagocytosis. This is Negative regulator YfiR from Pseudomonas aeruginosa (strain ATCC 15692 / DSM 22644 / CIP 104116 / JCM 14847 / LMG 12228 / 1C / PRS 101 / PAO1).